Consider the following 71-residue polypeptide: UPF0346 protein SAK_1533 (71 aa).

This sequence belongs to the UPF0346 family.

This Streptococcus agalactiae serotype Ia (strain ATCC 27591 / A909 / CDC SS700) protein is UPF0346 protein SAK_1533.